A 341-amino-acid chain; its full sequence is Phosphate acyltransferase (341 aa).

It belongs to the PlsX family. As to quaternary structure, homodimer. Probably interacts with PlsY.

It localises to the cytoplasm. The catalysed reaction is a fatty acyl-[ACP] + phosphate = an acyl phosphate + holo-[ACP]. It participates in lipid metabolism; phospholipid metabolism. Its function is as follows. Catalyzes the reversible formation of acyl-phosphate (acyl-PO(4)) from acyl-[acyl-carrier-protein] (acyl-ACP). This enzyme utilizes acyl-ACP as fatty acyl donor, but not acyl-CoA. In Elusimicrobium minutum (strain Pei191), this protein is Phosphate acyltransferase.